Consider the following 362-residue polypeptide: Molybdenum import ATP-binding protein ModC (362 aa).

The region spanning 1–236 is the ABC transporter domain; the sequence is MTASGLYLNL…TQSPTAQGED (236 aa). 36-43 contributes to the ATP binding site; sequence GPSGSGKT. The region spanning 297–362 is the Mop domain; it reads DSTILNKLAA…AQVKSVAIVG (66 aa).

The protein belongs to the ABC transporter superfamily. Molybdate importer (TC 3.A.1.8) family. The complex is composed of two ATP-binding proteins (ModC), two transmembrane proteins (ModB) and a solute-binding protein (ModA).

It localises to the cell inner membrane. The catalysed reaction is molybdate(out) + ATP + H2O = molybdate(in) + ADP + phosphate + H(+). In terms of biological role, part of the ABC transporter complex ModABC involved in molybdenum import. Responsible for energy coupling to the transport system. The protein is Molybdenum import ATP-binding protein ModC of Saccharophagus degradans (strain 2-40 / ATCC 43961 / DSM 17024).